A 135-amino-acid chain; its full sequence is Large ribosomal subunit protein uL16c (135 aa).

The span at 1-17 shows a compositional bias: basic residues; the sequence is MLSPKRTRFRKQHRGRM. Residues 1-20 form a disordered region; sequence MLSPKRTRFRKQHRGRMKGT.

It belongs to the universal ribosomal protein uL16 family. As to quaternary structure, part of the 50S ribosomal subunit.

It localises to the plastid. The protein resides in the chloroplast. This is Large ribosomal subunit protein uL16c from Lemna minor (Common duckweed).